The primary structure comprises 152 residues: Large ribosomal subunit protein uL13 (152 aa).

A disordered region spans residues 133-152; the sequence is EHPHQAQKPQPLTINTIPGA. Residues 139–152 are compositionally biased toward polar residues; it reads QKPQPLTINTIPGA.

The protein belongs to the universal ribosomal protein uL13 family. As to quaternary structure, part of the 50S ribosomal subunit.

This protein is one of the early assembly proteins of the 50S ribosomal subunit, although it is not seen to bind rRNA by itself. It is important during the early stages of 50S assembly. This chain is Large ribosomal subunit protein uL13, found in Thermosynechococcus vestitus (strain NIES-2133 / IAM M-273 / BP-1).